We begin with the raw amino-acid sequence, 122 residues long: Large ribosomal subunit protein uL18 (122 aa).

Basic residues predominate over residues 1–19 (MSTLSRKQKTQKRHKRLRR). The disordered stretch occupies residues 1–26 (MSTLSRKQKTQKRHKRLRRNLSGTDQ).

Belongs to the universal ribosomal protein uL18 family. Part of the 50S ribosomal subunit; part of the 5S rRNA/L5/L18/L25 subcomplex. Contacts the 5S and 23S rRNAs.

Its function is as follows. This is one of the proteins that bind and probably mediate the attachment of the 5S RNA into the large ribosomal subunit, where it forms part of the central protuberance. The sequence is that of Large ribosomal subunit protein uL18 from Prochlorococcus marinus (strain SARG / CCMP1375 / SS120).